Here is a 395-residue protein sequence, read N- to C-terminus: Succinyl-diaminopimelate desuccinylase (395 aa).

Histidine 74 is a Zn(2+) binding site. Residue aspartate 76 is part of the active site. Aspartate 107 serves as a coordination point for Zn(2+). The Proton acceptor role is filled by glutamate 141. Zn(2+) is bound by residues glutamate 142, glutamate 170, and histidine 368.

It belongs to the peptidase M20A family. DapE subfamily. As to quaternary structure, homodimer. It depends on Zn(2+) as a cofactor. Requires Co(2+) as cofactor.

The catalysed reaction is N-succinyl-(2S,6S)-2,6-diaminopimelate + H2O = (2S,6S)-2,6-diaminopimelate + succinate. The protein operates within amino-acid biosynthesis; L-lysine biosynthesis via DAP pathway; LL-2,6-diaminopimelate from (S)-tetrahydrodipicolinate (succinylase route): step 3/3. Functionally, catalyzes the hydrolysis of N-succinyl-L,L-diaminopimelic acid (SDAP), forming succinate and LL-2,6-diaminopimelate (DAP), an intermediate involved in the bacterial biosynthesis of lysine and meso-diaminopimelic acid, an essential component of bacterial cell walls. This chain is Succinyl-diaminopimelate desuccinylase, found in Brucella melitensis biotype 1 (strain ATCC 23456 / CCUG 17765 / NCTC 10094 / 16M).